Consider the following 209-residue polypeptide: Ras-like protein (209 aa).

15 to 22 (GGGGEGKS) contributes to the GTP binding site. Residues 37-45 (YDPTIEESY) carry the Effector region motif. GTP is bound by residues 62-66 (DTAGQ) and 121-124 (NKCD). 2 S-palmitoyl cysteine lipidation sites follow: C202 and C203. Position 206 is a cysteine methyl ester (C206). C206 is lipidated: S-geranylgeranyl cysteine. A propeptide spans 207–209 (IVM) (removed in mature form).

This sequence belongs to the small GTPase superfamily. Ras family.

Its subcellular location is the cell membrane. It carries out the reaction GTP + H2O = GDP + phosphate + H(+). With respect to regulation, alternates between an inactive form bound to GDP and an active form bound to GTP. Activated by a guanine nucleotide-exchange factor (GEF) and inactivated by a GTPase-activating protein (GAP). This Laccaria bicolor (Bicoloured deceiver) protein is Ras-like protein.